Consider the following 331-residue polypeptide: D-galactose/methyl-galactoside binding periplasmic protein MglB (331 aa).

The first 24 residues, 1 to 24 (MKKTAVLSTVAFAIALGSASASFA), serve as a signal peptide directing secretion. Asp-38 and Asn-115 together coordinate beta-D-galactose. Beta-D-glucose contacts are provided by Asp-38 and Asn-115. Residues Asp-158, Asn-160, Asp-162, Lys-164, and Gln-166 each coordinate Ca(2+). Beta-D-galactose contacts are provided by His-176, Asp-178, and Arg-182. 3 residues coordinate beta-D-glucose: His-176, Asp-178, and Arg-182. Residue Glu-229 participates in Ca(2+) binding. Residues Asn-235, Asp-259, and Asn-279 each contribute to the beta-D-galactose site. Residues Asn-235, Asp-259, and Asn-279 each contribute to the beta-D-glucose site.

Belongs to the bacterial solute-binding protein 2 family. As to quaternary structure, the ABC transporter complex is composed of one ATP-binding protein (MglA), two transmembrane proteins (MglC) and a solute-binding protein (MglB).

It is found in the periplasm. Its function is as follows. Part of the ABC transporter complex MglABC involved in galactose/methyl galactoside import. This is D-galactose/methyl-galactoside binding periplasmic protein MglB (mglB) from Haemophilus influenzae (strain ATCC 51907 / DSM 11121 / KW20 / Rd).